Consider the following 979-residue polypeptide: UPF0182 protein MT0070 (979 aa).

7 consecutive transmembrane segments (helical) span residues 19–41 (LVTA…DIYV), 63–85 (LAIV…LLAY), 114–136 (LFGW…FDWV), 174–196 (WLFV…FGGL), 208–230 (AARV…AYWL), 261–280 (LVLV…AIFL), and 285–307 (IPAM…WPLL). The disordered stretch occupies residues 894 to 948 (VFGPGTGRVATXPGGDAASAPPPGAGGPAPPQGVPPPRTTQPPAAPPRGPDVPPA). Positions 913-946 (APPPGAGGPAPPQGVPPPRTTQPPAAPPRGPDVP) are enriched in pro residues.

The protein belongs to the UPF0182 family.

The protein resides in the cell membrane. In Mycobacterium tuberculosis (strain CDC 1551 / Oshkosh), this protein is UPF0182 protein MT0070.